The chain runs to 94 residues: Small ribosomal subunit protein uS19 (94 aa).

This sequence belongs to the universal ribosomal protein uS19 family.

Protein S19 forms a complex with S13 that binds strongly to the 16S ribosomal RNA. In Hamiltonella defensa subsp. Acyrthosiphon pisum (strain 5AT), this protein is Small ribosomal subunit protein uS19.